Here is a 632-residue protein sequence, read N- to C-terminus: MSSLAVRDPAMDRSLRSVFVGNIPYEATEEQLKDIFSEVGSVVSFRLVYDRETGKPKGYGFCEYQDQETALSAMRNLNGREFSGRALRVDNAASEKNKEELKSLGPAAPIIDSPYGDPIDPEDAPESITRAVASLPPEQMFELMKQMKLCVQNSHQEARNMLLQNPQLAYALLQAQVVMRIMDPEIALKILHRKIHVTPLIPGKSQPVSGPGPGGPGPSGPGGPGPGPAPGLCPGPNVMLNQQNPPAPQPQHLPRRPVKDIPPLMQTSIQGGIPAPGPIPAAVPGPGPGSLTPGGAMQPQVGMPVVGPVPLERGQMQISDPRPPMPRGPMPSGGIPPRGLLGDAPNDPRGGTLLSVTGEVEPRGYMGPPHQGPPMHHGHDNRGPASHDMRGGPLAADPRMLIGEPRGPMIDQRGLPMDGRGGRESRGMETRPMETEVLEPRGMERRMETCAMETRGMDARGLEMRGPGPSSRGPMTGGIQGPGPINMGAGGPQGPRQVPNIAGVGNPGGTMQGAGIQGGGMQGAGMQGGGMQGAGMQGGGMQGAGMQAGMQGASMQGGMQGAGMQGASKQGGGQPSSFSPGQSQVTPQDQEKAALIMQVLQLTADQIAMLPPEQRQSILILKEQIQKSTGAS.

The RRM domain maps to 16-94; sequence RSVFVGNIPY…RALRVDNAAS (79 aa). Disordered stretches follow at residues 201–296 and 365–433; these read IPGK…PGGA and YMGP…TRPM. Residues 213-233 show a composition bias toward pro residues; sequence PGGPGPSGPGGPGPGPAPGLC. Over residues 234–244 the composition is skewed to low complexity; that stretch reads PGPNVMLNQQN. Positions 275–287 are enriched in pro residues; it reads APGPIPAAVPGPG. Over residues 365–375 the composition is skewed to low complexity; sequence YMGPPHQGPPM. Basic and acidic residues-rich tracts occupy residues 377–390 and 420–433; these read HGHD…HDMR and RGGR…TRPM. The stretch at 428-432 is one 1-1; approximate repeat; sequence METRP. Residues 428-466 form an 8 X 5 AA tandem repeats of M-E-T-R-[AG] region; the sequence is METRPMETEVLEPRGMERRMETCAMETRGMDARGLEMRG. Residues 433-437 form a 1-2; approximate repeat; that stretch reads METEV. One copy of the 1-3; approximate repeat lies at 438–442; that stretch reads LEPRG. One copy of the 1-4; approximate repeat lies at 443–446; sequence MERR. The 1-5; approximate repeat unit spans residues 447 to 451; that stretch reads METCA. A 1-6 repeat occupies 452–456; it reads METRG. The stretch at 457–461 is one 1-7; approximate repeat; that stretch reads MDARG. One copy of the 1-8; approximate repeat lies at 462 to 466; the sequence is LEMRG. A 2-1; approximate repeat occupies 508–512; the sequence is GGTMQ. The 12 X 5 AA tandem repeats of G-[AT]-G-[MI]-Q stretch occupies residues 508 to 565; that stretch reads GGTMQGAGIQGGGMQGAGMQGGGMQGAGMQGGGMQGAGMQAGMQGASMQGGMQGAGMQ. The 2-2 repeat unit spans residues 513 to 517; that stretch reads GAGIQ. One copy of the 2-3; approximate repeat lies at 518 to 522; sequence GGGMQ. Positions 519 to 543 are enriched in gly residues; it reads GGMQGAGMQGGGMQGAGMQGGGMQG. A disordered region spans residues 519–590; the sequence is GGMQGAGMQG…GQSQVTPQDQ (72 aa). The stretch at 523-527 is one 2-4 repeat; sequence GAGMQ. A 2-5; approximate repeat occupies 528–532; it reads GGGMQ. One copy of the 2-6 repeat lies at 533 to 537; that stretch reads GAGMQ. Residues 538–542 form a 2-7; approximate repeat; it reads GGGMQ. One copy of the 2-8 repeat lies at 543 to 547; that stretch reads GAGMQ. Residues 544–557 are compositionally biased toward low complexity; that stretch reads AGMQAGMQGASMQG. One copy of the 2-9; approximate repeat lies at 548 to 551; that stretch reads AGMQ. The 2-10; approximate repeat unit spans residues 552 to 556; the sequence is GASMQ. The 2-11; approximate repeat unit spans residues 557-560; sequence GGMQ. A compositionally biased stretch (gly residues) spans 558-574; the sequence is GMQGAGMQGASKQGGGQ. The stretch at 561–565 is one 2-12 repeat; it reads GAGMQ. Positions 575-584 are enriched in low complexity; it reads PSSFSPGQSQ. A Phosphoserine modification is found at serine 579.

As to expression, expressed in testes, where it is restricted to pachytene spermatocytes and spermatids, and in the brain (at protein level).

It is found in the nucleus. May play a significant role in AAUAAA-independent mRNA polyadenylation in germ cells. Directly involved in the binding to pre-mRNAs. This chain is Cleavage stimulation factor subunit 2 tau variant (Cstf2t), found in Mus musculus (Mouse).